A 518-amino-acid polypeptide reads, in one-letter code: Dihydropyrimidinase 2 (518 aa).

Histidine 59, histidine 61, and lysine 152 together coordinate Zn(2+). Residue lysine 152 is modified to N6-carboxylysine. Tyrosine 157 is a binding site for substrate. Zn(2+) contacts are provided by histidine 185 and histidine 241. Residue serine 291 coordinates substrate. Residue aspartate 319 participates in Zn(2+) binding. Asparagine 340 is a binding site for substrate.

It belongs to the metallo-dependent hydrolases superfamily. Hydantoinase/dihydropyrimidinase family. Homotetramer. The cofactor is Zn(2+). In terms of processing, carboxylation allows a single lysine to coordinate two zinc ions.

It carries out the reaction 5,6-dihydrouracil + H2O = 3-(carbamoylamino)propanoate + H(+). This chain is Dihydropyrimidinase 2 (dhp-2), found in Caenorhabditis briggsae.